The sequence spans 318 residues: Death effector domain-containing protein (318 aa).

Residues 25 to 103 form the DED domain; it reads SLHRMFDIVG…RHDLLPYVTL (79 aa). Disordered stretches follow at residues 128–147 and 160–191; these read PRALSDPEPRPPQPSKTVPP and QMCSKRPARGRATLGSQRKRRKSVTPDPKEKQ.

As to quaternary structure, interacts with CASP8, CASP10, KRT8, KRT18, CASP3 and FADD. Homodimerizes and heterodimerizes with DEDD2. Exists predominantly in a mono- or diubiquitinated form. In terms of tissue distribution, widely expressed with highest levels in testis.

It is found in the cytoplasm. The protein resides in the nucleus. Its subcellular location is the nucleolus. Its function is as follows. A scaffold protein that directs CASP3 to certain substrates and facilitates their ordered degradation during apoptosis. May also play a role in mediating CASP3 cleavage of KRT18. Regulates degradation of intermediate filaments during apoptosis. May play a role in the general transcription machinery in the nucleus and might be an important regulator of the activity of GTF3C3. Inhibits DNA transcription in vitro. The sequence is that of Death effector domain-containing protein (DEDD) from Homo sapiens (Human).